Here is a 394-residue protein sequence, read N- to C-terminus: Elongation factor Tu (394 aa).

The 195-residue stretch at 10-204 (KPHINVGTIG…YLDTYIPEPK (195 aa)) folds into the tr-type G domain. The segment at 19-26 (GHVDHGKT) is G1. 19-26 (GHVDHGKT) contacts GTP. Mg(2+) is bound at residue Thr26. The tract at residues 60-64 (GITIN) is G2. The interval 81–84 (DCPG) is G3. GTP is bound by residues 81–85 (DCPGH) and 136–139 (NKCD). The G4 stretch occupies residues 136–139 (NKCD). The G5 stretch occupies residues 174–176 (SAL).

Belongs to the TRAFAC class translation factor GTPase superfamily. Classic translation factor GTPase family. EF-Tu/EF-1A subfamily. Monomer.

The protein resides in the cytoplasm. It catalyses the reaction GTP + H2O = GDP + phosphate + H(+). In terms of biological role, GTP hydrolase that promotes the GTP-dependent binding of aminoacyl-tRNA to the A-site of ribosomes during protein biosynthesis. This Buchnera aphidicola subsp. Baizongia pistaciae (strain Bp) protein is Elongation factor Tu.